Reading from the N-terminus, the 192-residue chain is GTP cyclohydrolase-2 (192 aa).

Arginine 50–glutamate 54 contacts GTP. 3 residues coordinate Zn(2+): cysteine 55, cysteine 66, and cysteine 68. GTP-binding positions include glutamate 92–arginine 94 and threonine 114. The active-site Proton acceptor is aspartate 126. Catalysis depends on arginine 128, which acts as the Nucleophile. 2 residues coordinate GTP: threonine 149 and lysine 154.

It belongs to the GTP cyclohydrolase II family. The cofactor is Zn(2+).

It carries out the reaction GTP + 4 H2O = 2,5-diamino-6-hydroxy-4-(5-phosphoribosylamino)-pyrimidine + formate + 2 phosphate + 3 H(+). The protein operates within cofactor biosynthesis; riboflavin biosynthesis; 5-amino-6-(D-ribitylamino)uracil from GTP: step 1/4. Its function is as follows. Catalyzes the conversion of GTP to 2,5-diamino-6-ribosylamino-4(3H)-pyrimidinone 5'-phosphate (DARP), formate and pyrophosphate. In Helicobacter acinonychis (strain Sheeba), this protein is GTP cyclohydrolase-2.